A 413-amino-acid polypeptide reads, in one-letter code: Serine hydroxymethyltransferase (413 aa).

(6S)-5,6,7,8-tetrahydrofolate-binding positions include Leu119 and 123–125; that span reads GHL. At Lys228 the chain carries N6-(pyridoxal phosphate)lysine. Glu243 contacts (6S)-5,6,7,8-tetrahydrofolate.

This sequence belongs to the SHMT family. Homodimer. Requires pyridoxal 5'-phosphate as cofactor.

It localises to the cytoplasm. It carries out the reaction (6R)-5,10-methylene-5,6,7,8-tetrahydrofolate + glycine + H2O = (6S)-5,6,7,8-tetrahydrofolate + L-serine. The protein operates within one-carbon metabolism; tetrahydrofolate interconversion. Its pathway is amino-acid biosynthesis; glycine biosynthesis; glycine from L-serine: step 1/1. Its function is as follows. Catalyzes the reversible interconversion of serine and glycine with tetrahydrofolate (THF) serving as the one-carbon carrier. This reaction serves as the major source of one-carbon groups required for the biosynthesis of purines, thymidylate, methionine, and other important biomolecules. Also exhibits THF-independent aldolase activity toward beta-hydroxyamino acids, producing glycine and aldehydes, via a retro-aldol mechanism. This chain is Serine hydroxymethyltransferase, found in Thermoanaerobacter pseudethanolicus (strain ATCC 33223 / 39E) (Clostridium thermohydrosulfuricum).